The primary structure comprises 1005 residues: MTNSISGDQPTVTTFTSSTTSASGASGSLGASSVSTTANATVTQTANATNSAATSSIQTTGETVVNYTNSASAPTVTVSTSSSSTQATATSNKTSQAVAGKITSPDTSESSETSSTSSSDHIPSDYEPISTTENIYENIYESIDDSSTSGPENTSGGAAALNSLRGSSYSNYDDAAADYEPISTTENIYESIDDSSTSDPENTSGGAAALNSLRGSSYSNYDDAAADYEPISTTENIYENIYESIDDSSTSGPENTSGGAAALNSLRGSSYSNYDDAAADYEPISTTENIYESIDDSSTSDPENTSGGAAAALNSLRGSSYSNYDDAAADYEPISTTENIYESIDDSSTSDPENTSGGAAALNSLRGSSYSNYDDAAADYEPISTTENIYENIYESIDGSSTSDPENTSGGAAAALNSLRGSSYTTGPRNEGVFGPGPEGLPDMSLPSYDPTNKTSLLTFLSNPHVKSKMLENSGHFVFIDTDRSSFILVPNGNWDQVCSIKVQNGKTKEDLDIKDLENMCAKFCTGFNKFSGDWDSRVEPMMSAKAGVASGGNLPNTVIINNKFKTCVAYGPWNSREASSGYTPSAWRRGHQVNFGEIFEKANDFNKINWGTQAGPSSEDDGISFSNETPGAGPAAAPSPTPSSIPVINVNVNVGGTNVNIRDTNVNTTNTTPTTQSTDASTDTSDIDNINTNNQTDDINTTDKDSDGAGGVNGDISETESSSGDDSGSVSSSESDKNASVGNDGPAMKDILSAVRKHLDVVYPGDNGGSTEGPLQANQTLGDIVQDMETTGTSQETVVSPWKGSTSSTGSAGGSGSVQTLLPSPPPTPSTTTLRTGTGATTTSLMMGGPIKADIITTGGGGRIPGGGTLEKLLPRIRAHLDISFDGQGDLVSTEEPQLGSIVNKFRKETGSGGIVASVESAPGKPGSAQVLTGTGGDKGNLFQAAAAVTQALGNVAGKVNLAIQGQKLSSLVNDDGKGSVGRDLFQAATQTTQALSSLIDTVG.

Polar residues predominate over residues 1–10; the sequence is MTNSISGDQP. 7 disordered regions span residues 1–36, 74–128, 191–214, 343–365, 611–645, 661–748, and 792–847; these read MTNS…SVST, PTVT…DYEP, SIDD…NSLR, SIDD…LNSL, WGTQ…TPSS, NIRD…DGPA, and TGTS…TSLM. Low complexity-rich tracts occupy residues 11–36 and 74–121; these read TVTT…SVST and PTVT…SSDH. Composition is skewed to polar residues over residues 191–205 and 343–357; these read SIDD…NTSG. 3 stretches are compositionally biased toward low complexity: residues 661 to 700, 715 to 734, and 831 to 846; these read NIRD…TDDI, GDIS…VSSS, and STTT…TTSL.

It belongs to the chlamydial CPn_0572/CT_456/TC_0741 family. Post-translationally, phosphorylated on a tyrosine on attachment to the host cell. Tyrosine phosphorylation is temporally and spatially associated with recruitment of actin to the site of chlamydial entry. Phosphorylated Tarp seems to remain cytoplasmically exposed on the inclusion membrane at one side of internalized elementary bodies for several hours after entry.

It localises to the secreted. In terms of biological role, appears to initiate or participate in signaling events that regulate the actin recruitment, which ultimately leads to internalization. This Chlamydia trachomatis serovar L2 (strain ATCC VR-902B / DSM 19102 / 434/Bu) protein is Translocated actin-recruiting phosphoprotein (tarP).